We begin with the raw amino-acid sequence, 124 residues long: Small ribosomal subunit protein uS12 (124 aa).

Residue Asp89 is modified to 3-methylthioaspartic acid. Positions 105–124 (QGVKNRKQARSRYGAKKEKS) are disordered. The segment covering 108-118 (KNRKQARSRYG) has biased composition (basic residues).

Belongs to the universal ribosomal protein uS12 family. As to quaternary structure, part of the 30S ribosomal subunit. Contacts proteins S8 and S17. May interact with IF1 in the 30S initiation complex.

In terms of biological role, with S4 and S5 plays an important role in translational accuracy. Its function is as follows. Interacts with and stabilizes bases of the 16S rRNA that are involved in tRNA selection in the A site and with the mRNA backbone. Located at the interface of the 30S and 50S subunits, it traverses the body of the 30S subunit contacting proteins on the other side and probably holding the rRNA structure together. The combined cluster of proteins S8, S12 and S17 appears to hold together the shoulder and platform of the 30S subunit. This is Small ribosomal subunit protein uS12 from Mycobacterium avium (strain 104).